A 444-amino-acid chain; its full sequence is Adenylosuccinate synthetase (444 aa).

GTP is bound by residues 12 to 18 and 40 to 42; these read GDEGKGK and GHT. Aspartate 13 functions as the Proton acceptor in the catalytic mechanism. Positions 13 and 40 each coordinate Mg(2+). Residues 13 to 16, 38 to 41, threonine 128, arginine 142, glutamine 223, threonine 238, and arginine 302 each bind IMP; these read DEGK and NAGH. Histidine 41 serves as the catalytic Proton donor. Position 298–304 (298–304) interacts with substrate; the sequence is TTTGRRR. Residues arginine 304, 330–332, and 412–414 each bind GTP; these read KLD and SLG.

The protein belongs to the adenylosuccinate synthetase family. As to quaternary structure, homodimer. The cofactor is Mg(2+).

It localises to the cytoplasm. It carries out the reaction IMP + L-aspartate + GTP = N(6)-(1,2-dicarboxyethyl)-AMP + GDP + phosphate + 2 H(+). It functions in the pathway purine metabolism; AMP biosynthesis via de novo pathway; AMP from IMP: step 1/2. Plays an important role in the de novo pathway of purine nucleotide biosynthesis. Catalyzes the first committed step in the biosynthesis of AMP from IMP. This chain is Adenylosuccinate synthetase, found in Synechococcus elongatus (strain ATCC 33912 / PCC 7942 / FACHB-805) (Anacystis nidulans R2).